The following is a 335-amino-acid chain: Probable cytosolic iron-sulfur protein assembly protein Ciao1 (335 aa).

7 WD repeats span residues 12 to 51 (GHKGRIWGVAWHPKGNTFASCGEDKAIRIWSLSGNSWSTK), 57 to 96 (GHKRTIREIRWSPCGQYLASASFDATTAIWSKSSGEFECN), 101 to 140 (GHENEVKSVSWSKSGGLLATCSRDKSVWIWEVAGDDEFEC), 146 to 185 (PHTQDVKRVVWHPTKEILASASYDNTIKMFAESALDSDWD), 192 to 231 (SHTSTVWSIDFDADGERLVSCSDDTTLKIWRAYHPGNDAG), 250 to 289 (QHSRAIYDVSWCKLTGLIATACGDDGIRIFKESSDSKRDE), and 301 to 335 (AHEQDVNSVEWNPVMAGQLISCSDDGTIKIWKMLD).

Belongs to the WD repeat CIA1 family.

Essential component of the cytosolic iron-sulfur (Fe/S) protein assembly machinery. Required for the maturation of extramitochondrial Fe/S proteins. This chain is Probable cytosolic iron-sulfur protein assembly protein Ciao1, found in Drosophila willistoni (Fruit fly).